A 375-amino-acid chain; its full sequence is Growth/differentiation factor 8 (375 aa).

A signal peptide spans 1-23 (MQKLAVYVYIYLFMQIAVDPVAL). Positions 24–266 (DGSSQPTENA…VTDTPKRSRR (243 aa)) are excised as a propeptide. An N-linked (GlcNAc...) asparagine glycan is attached at Asn-71. Intrachain disulfides connect Cys-272-Cys-282, Cys-281-Cys-340, Cys-309-Cys-372, and Cys-313-Cys-374.

Belongs to the TGF-beta family. In terms of assembly, homodimer; disulfide-linked.

The protein resides in the secreted. In terms of biological role, acts specifically as a negative regulator of skeletal muscle growth. The polypeptide is Growth/differentiation factor 8 (MSTN) (Gallus gallus (Chicken)).